Reading from the N-terminus, the 185-residue chain is Ribosome-recycling factor (185 aa).

It belongs to the RRF family.

It is found in the cytoplasm. Functionally, responsible for the release of ribosomes from messenger RNA at the termination of protein biosynthesis. May increase the efficiency of translation by recycling ribosomes from one round of translation to another. This is Ribosome-recycling factor from Mycobacterium avium (strain 104).